The sequence spans 535 residues: Methylmalonate-semialdehyde/malonate-semialdehyde dehydrogenase [acylating], mitochondrial (535 aa).

The N-terminal 32 residues, 1–32 (MAAAVAAAAAMRSRILQVSSKVNATWYPASSF), are a transit peptide targeting the mitochondrion. N6-acetyllysine; alternate occurs at positions 47, 52, 55, and 76. N6-succinyllysine; alternate occurs at positions 47, 52, 55, and 76. Lys-87 carries the post-translational modification N6-acetyllysine. N6-acetyllysine; alternate occurs at positions 117 and 129. An N6-succinyllysine; alternate mark is found at Lys-117 and Lys-129. NAD(+)-binding residues include Ala-183, Phe-185, Lys-209, Glu-212, Arg-213, and Ser-262. A Phosphoserine modification is found at Ser-262. Lys-298 is subject to N6-acetyllysine. Residue Cys-317 is the Nucleophile of the active site. N6-acetyllysine occurs at positions 330 and 331. Residues Lys-364 and Lys-376 each carry the N6-acetyllysine; alternate modification. An N6-succinyllysine; alternate mark is found at Lys-364 and Lys-376. Ser-380 carries the phosphoserine modification. Lys-391 is modified (N6-succinyllysine). Glu-417 provides a ligand contact to NAD(+). N6-acetyllysine is present on Lys-500. Lys-517 carries the post-translational modification N6-succinyllysine.

The protein belongs to the aldehyde dehydrogenase family. Homotetramer. Post-translationally, acetylation of Lys-55; Lys-117 and Lys-331 is observed in liver mitochondria from fasted mice but not from fed mice.

The protein resides in the mitochondrion. The enzyme catalyses 3-oxopropanoate + NAD(+) + CoA + H2O = hydrogencarbonate + acetyl-CoA + NADH + H(+). It carries out the reaction 2-methyl-3-oxopropanoate + NAD(+) + CoA + H2O = propanoyl-CoA + hydrogencarbonate + NADH + H(+). The catalysed reaction is (R)-2-methyl-3-oxopropanoate + NAD(+) + CoA + H2O = propanoyl-CoA + hydrogencarbonate + NADH + H(+). It catalyses the reaction (S)-2-methyl-3-oxopropanoate + NAD(+) + CoA + H2O = propanoyl-CoA + hydrogencarbonate + NADH + H(+). Its function is as follows. Malonate and methylmalonate semialdehyde dehydrogenase involved in the catabolism of valine, thymine, and compounds catabolized by way of beta-alanine, including uracil and cytidine. In Mus musculus (Mouse), this protein is Methylmalonate-semialdehyde/malonate-semialdehyde dehydrogenase [acylating], mitochondrial.